The following is a 593-amino-acid chain: MLLRWHSVIPLFLAMTVAFPNTYRTVVEDLPAIPEGWVQGNPPSPETSVRMNLAVGQQNTRTFEQIVLDISTPGHRNYGKHLSRRDLKGLLRPRRETSNLILSWLEKSGVPKRSIVDDGDWIHFVISISQAERMLQTRFYHFHDVQDPGISMIRTLKYSVPSRLARHVYMIQPTTKFGKPKKHANSIANLQAIYLSTNATENCNATITPRCLRELYKMGDYVAKPDCRNVIGVSGYLDQYARYSDFYKFLELYAPEMKGANFSVAHIGNGQNLQNSTRNSIEASLDIEYALGLSNASAVFYTTSGRGPLVPDLDQPEQEHNSNEPYLDQLHYLLSLPQEALPAVLSTSYGENEQSVPERFSHATCNLFAQLGARGVSVIFSSGDSGVGSSCLTNDKKKITRFNPTFPASCPFVTSVGATFKINPERATGFSSGGFSDRHSRPGYQNDAVQHYLDKLGDRWKGLYNPKGRGIPDVSAQGANFAIYDHGKVIIVSGTSASAPAFAAIIANLNAIRLRANKPVLGYLNPFIYGKGREGFTDIVHGGSKGCVGYSSTNRSTPAVPYASWNATEGWDPVTGVGTPNFRILAKIVQHME.

An N-terminal signal peptide occupies residues 1 to 18 (MLLRWHSVIPLFLAMTVA). Residues 19–198 (FPNTYRTVVE…NLQAIYLSTN (180 aa)) constitute a propeptide, removed in mature form. Asn-204, Asn-261, and Asn-275 each carry an N-linked (GlcNAc...) asparagine glycan. The Peptidase S53 domain maps to 206 to 592 (TITPRCLREL…RILAKIVQHM (387 aa)). Residues Glu-282 and Asp-286 each act as charge relay system in the active site. The N-linked (GlcNAc...) asparagine glycan is linked to Asn-295. The active-site Charge relay system is the Ser-496. Ca(2+) is bound by residues Asp-538 and Ile-539. Asn-554 and Asn-566 each carry an N-linked (GlcNAc...) asparagine glycan. Residues Gly-570 and Asp-572 each contribute to the Ca(2+) site.

Ca(2+) serves as cofactor.

Its subcellular location is the secreted. It is found in the extracellular space. The catalysed reaction is Release of an N-terminal tripeptide from a polypeptide.. Its function is as follows. Secreted tripeptidyl-peptidase which degrades proteins at acidic pHs and is involved in virulence. This is Probable tripeptidyl-peptidase SED3 (SED3) from Arthroderma benhamiae (strain ATCC MYA-4681 / CBS 112371) (Trichophyton mentagrophytes).